A 285-amino-acid polypeptide reads, in one-letter code: Gap junction Cx32.2 protein (285 aa).

Residues 2–19 lie on the Cytoplasmic side of the membrane; it reads GDLGFLSKLLDQVQSHST. Residues 20–40 form a helical membrane-spanning segment; it reads VIGKIWMTVLFLFRIMVLGAG. Topologically, residues 41–76 are extracellular; the sequence is AESVWGDEQSDFTCNTQQPGCENVCYDWTFPISHIR. A helical membrane pass occupies residues 77-99; that stretch reads FWVLQIIFVSTPTLIYLGHAMHI. Residues 100 to 148 are Cytoplasmic-facing; sequence IQQETKLRARLSSPGGSRLCKQPKYTNEQGKVKIKGNLLGSYLTQLVFK. The helical transmembrane segment at 149–171 threads the bilayer; sequence IIIEAAFIVGQYYLYGFIMVPMF. Residues 172 to 194 are Extracellular-facing; sequence PCSKKPCPFTVECYMSRPTEKTI. The helical transmembrane segment at 195-217 threads the bilayer; it reads FIIFMLVVACVSLLLNVIEVFYL. At 218-285 the chain is on the cytoplasmic side; sequence ICTRVRCGSR…AKEEKRLLSH (68 aa). A disordered region spans residues 264–285; that stretch reads ETSQSIGGSLDGAKEEKRLLSH. The segment covering 275–285 has biased composition (basic and acidic residues); sequence GAKEEKRLLSH.

The protein belongs to the connexin family. Beta-type (group I) subfamily. A connexon is composed of a hexamer of connexins.

The protein resides in the cell membrane. Its subcellular location is the cell junction. The protein localises to the gap junction. In terms of biological role, one gap junction consists of a cluster of closely packed pairs of transmembrane channels, the connexons, through which materials of low MW diffuse from one cell to a neighboring cell. May be involved in ovarian follicular maturation. This chain is Gap junction Cx32.2 protein, found in Micropogonias undulatus (Atlantic croaker).